Reading from the N-terminus, the 263-residue chain is Triosephosphate isomerase (263 aa).

Substrate is bound at residue 10–12; the sequence is NWK. H104 (electrophile) is an active-site residue. Catalysis depends on E176, which acts as the Proton acceptor. Residues G182, S221, and 242–243 contribute to the substrate site; that span reads GG.

This sequence belongs to the triosephosphate isomerase family. In terms of assembly, homodimer.

The protein localises to the cytoplasm. The catalysed reaction is D-glyceraldehyde 3-phosphate = dihydroxyacetone phosphate. It functions in the pathway carbohydrate biosynthesis; gluconeogenesis. The protein operates within carbohydrate degradation; glycolysis; D-glyceraldehyde 3-phosphate from glycerone phosphate: step 1/1. Functionally, involved in the gluconeogenesis. Catalyzes stereospecifically the conversion of dihydroxyacetone phosphate (DHAP) to D-glyceraldehyde-3-phosphate (G3P). The protein is Triosephosphate isomerase of Haemophilus influenzae (strain 86-028NP).